The sequence spans 310 residues: Transcription factor UNE12 (310 aa).

Disordered regions lie at residues 124 to 156 (HGQP…ATDP) and 229 to 253 (SSSV…WSND). Residues 152–201 (QATDPHSIAERLRRERIAERIRALQELVPTVNKTDRAAMIDEIVDYVKFL) enclose the bHLH domain.

In terms of assembly, homodimer. As to expression, expressed constitutively in roots, leaves, stems, and flowers.

It is found in the nucleus. Required for ovule fertilization. The sequence is that of Transcription factor UNE12 (UNE12) from Arabidopsis thaliana (Mouse-ear cress).